We begin with the raw amino-acid sequence, 293 residues long: tRNA (guanine-N(7)-)-methyltransferase (293 aa).

Residues glycine 105, 128-129 (EI), 163-164 (NT), and cysteine 183 contribute to the S-adenosyl-L-methionine site. Aspartate 186 is an active-site residue. 261-263 (TEE) contributes to the S-adenosyl-L-methionine binding site.

The protein belongs to the class I-like SAM-binding methyltransferase superfamily. TrmB family. In terms of assembly, forms a complex with trm82.

It localises to the nucleus. The enzyme catalyses guanosine(46) in tRNA + S-adenosyl-L-methionine = N(7)-methylguanosine(46) in tRNA + S-adenosyl-L-homocysteine. The protein operates within tRNA modification; N(7)-methylguanine-tRNA biosynthesis. Its function is as follows. Catalyzes the formation of N(7)-methylguanine at position 46 (m7G46) in tRNA. This chain is tRNA (guanine-N(7)-)-methyltransferase (trm8), found in Neurospora crassa (strain ATCC 24698 / 74-OR23-1A / CBS 708.71 / DSM 1257 / FGSC 987).